Consider the following 3166-residue polypeptide: Intermembrane lipid transfer protein VPS13A (3166 aa).

The Chorein N-terminal domain occupies 3–116 (FESVVVEVLN…LMETKQQELK (114 aa)). TPR repeat units follow at residues 212–245 (LFAY…ENIV) and 373–406 (LTSK…QQAE). Phosphothreonine is present on threonine 831. Position 835 is a phosphoserine (serine 835). Residues 838–844 (EFFDAPC) carry the FFAT motif. The segment covering 1343 to 1359 (APSSANKDPETMTSGVT) has biased composition (polar residues). Residues 1343-1365 (APSSANKDPETMTSGVTSPPDHS) are disordered. Serine 1410 carries the post-translational modification Phosphoserine. TPR repeat units follow at residues 1806–1840 (AIVE…TLSK) and 1999–2034 (ISVF…VPED). The SHR-BD domain occupies 2202-2447 (VAFHSPYWMV…VYYTWADPVG (246 aa)). 2 required for mitochondrial localization regions span residues 2607 to 3166 (LQPH…SPRL) and 2743 to 3166 (EYEV…SPRL). TPR repeat units follow at residues 2716-2750 (ADLV…VSSV) and 2852-2890 (ILGL…PEEF). The tract at residues 2945-3019 (PAGLREGITR…SSTFQGIKRA (75 aa)) is required for lipid droplet localization.

Belongs to the VPS13 family. As to quaternary structure, interacts (via FFAT motif) with VAPA and VAPB. Interacts with RAB7A. Interacts with XK.

The protein resides in the mitochondrion outer membrane. It localises to the endoplasmic reticulum membrane. Its subcellular location is the endosome membrane. The protein localises to the lysosome membrane. It is found in the lipid droplet. The protein resides in the golgi apparatus. It localises to the cytoplasmic vesicle. Its subcellular location is the secretory vesicle. The protein localises to the neuronal dense core vesicle. Its function is as follows. Mediates the transfer of lipids between membranes at organelle contact sites. Required for the formation or stabilization of ER-mitochondria contact sites which enable transfer of lipids between the ER and mitochondria. Negatively regulates lipid droplet size and motility. Required for efficient lysosomal protein degradation. This chain is Intermembrane lipid transfer protein VPS13A, found in Mus musculus (Mouse).